A 486-amino-acid chain; its full sequence is Cardiolipin synthase A (486 aa).

The next 2 helical transmembrane spans lie at 3 to 23 and 38 to 58; these read TFYT…IAGV and MAWL…YLSF. PLD phosphodiesterase domains lie at 219–246 and 399–426; these read MDLR…VDPR and EGGL…DMRS. Catalysis depends on residues His224, Lys226, Asp231, His404, Lys406, and Asp411.

This sequence belongs to the phospholipase D family. Cardiolipin synthase subfamily. ClsA sub-subfamily.

It localises to the cell inner membrane. It carries out the reaction 2 a 1,2-diacyl-sn-glycero-3-phospho-(1'-sn-glycerol) = a cardiolipin + glycerol. Catalyzes the reversible phosphatidyl group transfer from one phosphatidylglycerol molecule to another to form cardiolipin (CL) (diphosphatidylglycerol) and glycerol. The sequence is that of Cardiolipin synthase A from Escherichia fergusonii (strain ATCC 35469 / DSM 13698 / CCUG 18766 / IAM 14443 / JCM 21226 / LMG 7866 / NBRC 102419 / NCTC 12128 / CDC 0568-73).